The sequence spans 409 residues: Elongation factor Tu (409 aa).

Residues 10–214 (KPHVNIGTIG…AVDSYIPDPE (205 aa)) enclose the tr-type G domain. The segment at 19 to 26 (GHVDHGKT) is G1. Residue 19 to 26 (GHVDHGKT) coordinates GTP. T26 contributes to the Mg(2+) binding site. The segment at 60-64 (GITIN) is G2. Residues 81 to 84 (DCPG) are G3. GTP contacts are provided by residues 81–85 (DCPGH) and 136–139 (NKED). Positions 136–139 (NKED) are G4. The tract at residues 174–176 (SGL) is G5.

It belongs to the TRAFAC class translation factor GTPase superfamily. Classic translation factor GTPase family. EF-Tu/EF-1A subfamily. In terms of assembly, monomer.

It is found in the cytoplasm. The catalysed reaction is GTP + H2O = GDP + phosphate + H(+). Functionally, GTP hydrolase that promotes the GTP-dependent binding of aminoacyl-tRNA to the A-site of ribosomes during protein biosynthesis. The sequence is that of Elongation factor Tu from Trichormus variabilis (strain ATCC 29413 / PCC 7937) (Anabaena variabilis).